Here is a 208-residue protein sequence, read N- to C-terminus: Large ribosomal subunit protein uL4 (208 aa).

The span at 47–58 (ARAARERSDVAR) shows a compositional bias: basic and acidic residues. Residues 47-84 (ARAARERSDVARTGKKFGRQKGGGTARHGDRRAPIFIG) form a disordered region.

The protein belongs to the universal ribosomal protein uL4 family. Part of the 50S ribosomal subunit.

One of the primary rRNA binding proteins, this protein initially binds near the 5'-end of the 23S rRNA. It is important during the early stages of 50S assembly. It makes multiple contacts with different domains of the 23S rRNA in the assembled 50S subunit and ribosome. In terms of biological role, forms part of the polypeptide exit tunnel. This Sphingopyxis alaskensis (strain DSM 13593 / LMG 18877 / RB2256) (Sphingomonas alaskensis) protein is Large ribosomal subunit protein uL4.